The sequence spans 341 residues: Anthranilate phosphoribosyltransferase (341 aa).

5-phospho-alpha-D-ribose 1-diphosphate contacts are provided by residues G79, 82 to 83 (GD), T87, 89 to 92 (NIST), 107 to 115 (KHGNRAVSS), and S119. Position 79 (G79) interacts with anthranilate. Residue S91 participates in Mg(2+) binding. N110 is an anthranilate binding site. R165 lines the anthranilate pocket. Residues D224 and E225 each contribute to the Mg(2+) site.

Belongs to the anthranilate phosphoribosyltransferase family. In terms of assembly, homodimer. Requires Mg(2+) as cofactor.

The enzyme catalyses N-(5-phospho-beta-D-ribosyl)anthranilate + diphosphate = 5-phospho-alpha-D-ribose 1-diphosphate + anthranilate. Its pathway is amino-acid biosynthesis; L-tryptophan biosynthesis; L-tryptophan from chorismate: step 2/5. Its function is as follows. Catalyzes the transfer of the phosphoribosyl group of 5-phosphorylribose-1-pyrophosphate (PRPP) to anthranilate to yield N-(5'-phosphoribosyl)-anthranilate (PRA). This is Anthranilate phosphoribosyltransferase from Bacillus cereus (strain ATCC 14579 / DSM 31 / CCUG 7414 / JCM 2152 / NBRC 15305 / NCIMB 9373 / NCTC 2599 / NRRL B-3711).